We begin with the raw amino-acid sequence, 109 residues long: MGSLIIEDLQEGFGKEAVKGKEITVHYTGWLENGTKFDSSLDRRQPLTITLGVGQVIKGWDEGFGGMKEGGKRKLTIPSEMGYGARGAGGVIPPHATLIFEVELLKVYE.

The 89-residue stretch at 20-108 (GKEITVHYTG…IFEVELLKVY (89 aa)) folds into the PPIase FKBP-type domain.

This sequence belongs to the FKBP-type PPIase family.

It catalyses the reaction [protein]-peptidylproline (omega=180) = [protein]-peptidylproline (omega=0). Its activity is regulated as follows. Inhibited by FK506. Its function is as follows. PPIases accelerate the folding of proteins. The sequence is that of FK506-binding protein (fbp) from Neisseria meningitidis serogroup A / serotype 4A (strain DSM 15465 / Z2491).